The primary structure comprises 299 residues: GTP cyclohydrolase FolE2 (299 aa).

It belongs to the GTP cyclohydrolase IV family.

It carries out the reaction GTP + H2O = 7,8-dihydroneopterin 3'-triphosphate + formate + H(+). It participates in cofactor biosynthesis; 7,8-dihydroneopterin triphosphate biosynthesis; 7,8-dihydroneopterin triphosphate from GTP: step 1/1. Functionally, converts GTP to 7,8-dihydroneopterin triphosphate. This is GTP cyclohydrolase FolE2 from Citrobacter koseri (strain ATCC BAA-895 / CDC 4225-83 / SGSC4696).